We begin with the raw amino-acid sequence, 631 residues long: Phosphomethylpyrimidine synthase (631 aa).

Residues Asn-239, Met-268, Tyr-297, His-333, 353-355 (SRG), 394-397 (DGLR), and Glu-433 contribute to the substrate site. His-437 is a Zn(2+) binding site. Tyr-460 serves as a coordination point for substrate. Zn(2+) is bound at residue His-501. The [4Fe-4S] cluster site is built by Cys-581, Cys-584, and Cys-589.

Belongs to the ThiC family. Homodimer. The cofactor is [4Fe-4S] cluster.

It carries out the reaction 5-amino-1-(5-phospho-beta-D-ribosyl)imidazole + S-adenosyl-L-methionine = 4-amino-2-methyl-5-(phosphooxymethyl)pyrimidine + CO + 5'-deoxyadenosine + formate + L-methionine + 3 H(+). Its pathway is cofactor biosynthesis; thiamine diphosphate biosynthesis. Catalyzes the synthesis of the hydroxymethylpyrimidine phosphate (HMP-P) moiety of thiamine from aminoimidazole ribotide (AIR) in a radical S-adenosyl-L-methionine (SAM)-dependent reaction. This is Phosphomethylpyrimidine synthase from Ralstonia nicotianae (strain ATCC BAA-1114 / GMI1000) (Ralstonia solanacearum).